The primary structure comprises 310 residues: Olfactory receptor 2A14 (310 aa).

Residues 1 to 24 (MEGNKTWITDITLPRFQVGPALEI) are Extracellular-facing. N-linked (GlcNAc...) asparagine glycosylation is present at Asn-4. Residues 25-48 (LLCGLFSAFYTLTLLGNGVIFGII) traverse the membrane as a helical segment. Over 49–56 (CLDCKLHT) the chain is Cytoplasmic. Residues 57–78 (PMYFFLSHLAIVDISYASNYVP) traverse the membrane as a helical segment. At 79–99 (KMLTNLMNQESTISFFPCIMQ) the chain is on the extracellular side. Residues Cys-96 and Cys-188 are joined by a disulfide bond. A helical membrane pass occupies residues 100 to 119 (TFLYLAFAHVECLILVVMSY). The Cytoplasmic segment spans residues 120-138 (DRYADICHPLRYNSLMSWR). The helical transmembrane segment at 139 to 157 (VCTVLAVASWVFSFLLALV) threads the bilayer. Over 158–194 (PLVLILSLPFCGPHEINHFFCEILSVLKLACADTWLN) the chain is Extracellular. A helical transmembrane segment spans residues 195-218 (QVVIFAACVFILVGPLCLVLVSYL). Residues 219 to 235 (RILAAILRIQSGEGRRK) lie on the Cytoplasmic side of the membrane. The chain crosses the membrane as a helical span at residues 236 to 258 (AFSTCSSHLCVVGLFFGSAIVTY). Residues 259-271 (MAPKSRHPEEQQK) lie on the Extracellular side of the membrane. The chain crosses the membrane as a helical span at residues 272–291 (VLSLFYSLFNPMLNPLIYSL). The Cytoplasmic portion of the chain corresponds to 292-310 (RNAEVKGALRRALRKERLT).

Belongs to the G-protein coupled receptor 1 family.

The protein resides in the cell membrane. Odorant receptor. This Homo sapiens (Human) protein is Olfactory receptor 2A14 (OR2A14).